Here is a 631-residue protein sequence, read N- to C-terminus: Pro-interleukin-16 (631 aa).

Disordered regions lie at residues 30–269 (ENPG…FPLT) and 317–344 (PKEG…ASDT). Positions 132 to 144 (SSSSSSIKQRISS) are enriched in low complexity. A Phosphoserine modification is found at Ser-221. The span at 322 to 344 (SPTSSSNEDSAANGSAETSASDT) shows a compositional bias: polar residues. Residues 405 to 501 (KQLDSIHVTI…IVTRKLTAES (97 aa)) form an interaction with PPP1R12A, PPP1R12B and PPP1R12C region. PDZ domains are found at residues 411-496 (HVTI…VTRK) and 533-618 (TVTL…IRRK).

As to quaternary structure, homotetramer. Pro-interleukin-16 interacts (via PDZ 2 domain) with PPP1R12A, PPP1R12B and PPP1R12C. Pro-interleukin-16 interacts with GRIN2A. Pro-interleukin-16 interacts with GABPB1. Pro-interleukin-16 interacts (via PDZ 3 domain) with HDAC3.

It is found in the secreted. The protein localises to the cytoplasm. Its subcellular location is the nucleus. Functionally, interleukin-16 stimulates a migratory response in CD4+ lymphocytes, monocytes, and eosinophils. Primes CD4+ T-cells for IL-2 and IL-15 responsiveness. Also induces T-lymphocyte expression of interleukin 2 receptor. Ligand for CD4. Its function is as follows. Pro-interleukin-16 is involved in cell cycle progression in T-cells. Appears to be involved in transcriptional regulation of SKP2 and is probably part of a transcriptional repression complex on the core promoter of the SKP2 gene. May act as a scaffold for GABPB1 (the DNA-binding subunit the GABP transcription factor complex) and HDAC3 thus maintaining transcriptional repression and blocking cell cycle progression in resting T-cells. This Chlorocebus aethiops (Green monkey) protein is Pro-interleukin-16 (IL16).